We begin with the raw amino-acid sequence, 586 residues long: GRB2-associated-binding protein 3 (586 aa).

The PH domain maps to 5 to 117; sequence DAVCTGWLVK…WVHSISQVCN (113 aa). 2 disordered regions span residues 149–171 and 281–335; these read AHAA…TEET and SSTI…KKPE. The segment covering 283–292 has biased composition (polar residues); that stretch reads TIQVDKNQGS. Basic and acidic residues predominate over residues 316–326; the sequence is HLSERRQEEWS. Ser344 is modified (phosphoserine). A disordered region spans residues 401–453; sequence GASGLGPHCSPDDYIPMNSGSISSPLPELPANLEPPPVNRDLKPQRKSRPPPL. Ser482 is subject to Phosphoserine.

It belongs to the GAB family. Interacts with PIK3R/p85, SHP2 and GRAP2/MONA. May interact with Grb2. In terms of processing, phosphorylated on tyrosine residue(s) after macrophage colony-stimulating factor (M-CSF) receptor stimulation.

The polypeptide is GRB2-associated-binding protein 3 (GAB3) (Homo sapiens (Human)).